The following is a 663-amino-acid chain: Alcohol oxidase 2 (663 aa).

8–38 (DILVLGGGSSGSCIAGRLANLDHSLKVGLIE) is an FAD binding site. The active-site Proton acceptor is the histidine 567. The short motif at 661–663 (ARF) is the Microbody targeting signal element.

This sequence belongs to the GMC oxidoreductase family. As to quaternary structure, homooctamer. Requires FAD as cofactor.

It localises to the peroxisome matrix. The enzyme catalyses a primary alcohol + O2 = an aldehyde + H2O2. It functions in the pathway energy metabolism; methane degradation. Minor isoform of alcohol oxidase, which catalyzes the oxidation of methanol to formaldehyde and hydrogen peroxide, the first step in the methanol utilization pathway of methylotrophic yeasts. The sequence is that of Alcohol oxidase 2 (AOX2) from Komagataella phaffii (strain ATCC 76273 / CBS 7435 / CECT 11047 / NRRL Y-11430 / Wegner 21-1) (Yeast).